Reading from the N-terminus, the 230-residue chain is Large ribosomal subunit protein uL1 (230 aa).

It belongs to the universal ribosomal protein uL1 family. As to quaternary structure, part of the 50S ribosomal subunit.

In terms of biological role, binds directly to 23S rRNA. The L1 stalk is quite mobile in the ribosome, and is involved in E site tRNA release. Functionally, protein L1 is also a translational repressor protein, it controls the translation of the L11 operon by binding to its mRNA. The protein is Large ribosomal subunit protein uL1 of Limosilactobacillus fermentum (strain NBRC 3956 / LMG 18251) (Lactobacillus fermentum).